Reading from the N-terminus, the 124-residue chain is UPF0231 protein Sama_0645 (124 aa).

The protein belongs to the UPF0231 family.

The polypeptide is UPF0231 protein Sama_0645 (Shewanella amazonensis (strain ATCC BAA-1098 / SB2B)).